The sequence spans 383 residues: Adaptive-response sensory kinase SasA (383 aa).

One can recognise a Histidine kinase domain in the interval 152–365 (MVAHELRTPL…CFTFTVPIWQ (214 aa)). His155 carries the post-translational modification Phosphohistidine; by autocatalysis.

As to quaternary structure, homooligomerizes. Interacts with KaiC. Participates in the KaiABC clock complex, whose core is composed of a KaiC homohexamer, 6 KaiB and up to 6 KaiA dimers. SasA and KaiB(fs) compete to bind to KaiC.

It carries out the reaction ATP + protein L-histidine = ADP + protein N-phospho-L-histidine.. In terms of biological role, member of the two-component regulatory system SasA/RpaA involved in genome-wide circadian gene expression. One of several clock output pathways. Participates in the Kai clock protein complex, the main circadian regulator in cyanobacteria, via its interaction with KaiC. KaiC enhances the autophosphorylation activity of SasA, which then transfers its phosphate group to RpaA to activate it. In addition to its output function, recruits fold-shifted KaiB (KaiB(fs)) to KaiC to cooperatively form the KaiB(6):KaiC(6) complex (independent of SasA kinase activity). Required for robustness of the circadian rhythm of gene expression and is involved in clock output, also required for adaptation to light/dark cycles. The protein is Adaptive-response sensory kinase SasA of Synechococcus sp. (strain CC9902).